A 218-amino-acid chain; its full sequence is Thiopurine S-methyltransferase (218 aa).

S-adenosyl-L-methionine-binding residues include W10, L45, E66, and R123.

It belongs to the class I-like SAM-binding methyltransferase superfamily. TPMT family.

It localises to the cytoplasm. It catalyses the reaction S-adenosyl-L-methionine + a thiopurine = S-adenosyl-L-homocysteine + a thiopurine S-methylether.. This is Thiopurine S-methyltransferase from Shewanella oneidensis (strain ATCC 700550 / JCM 31522 / CIP 106686 / LMG 19005 / NCIMB 14063 / MR-1).